The following is a 326-amino-acid chain: Peroxidase 6 (326 aa).

A signal peptide spans 1–20 (MKSFGLCLFILVSSPCLLQA). An N-linked (GlcNAc...) asparagine glycan is attached at N21. Intrachain disulfides connect C31–C112, C64–C69, C118–C318, and C197–C228. H62 serves as the catalytic Proton acceptor. 5 residues coordinate Ca(2+): D63, V66, G68, D70, and S72. N-linked (GlcNAc...) asparagine glycosylation occurs at N163. Residue H190 participates in heme b binding. Position 191 (T191) interacts with Ca(2+). N-linked (GlcNAc...) asparagine glycosylation is found at N206 and N230. Ca(2+) contacts are provided by D242, T245, and D250. The N-linked (GlcNAc...) asparagine glycan is linked to N274.

This sequence belongs to the peroxidase family. Classical plant (class III) peroxidase subfamily. Heme b is required as a cofactor. The cofactor is Ca(2+).

It is found in the secreted. It carries out the reaction 2 a phenolic donor + H2O2 = 2 a phenolic radical donor + 2 H2O. Removal of H(2)O(2), oxidation of toxic reductants, biosynthesis and degradation of lignin, suberization, auxin catabolism, response to environmental stresses such as wounding, pathogen attack and oxidative stress. These functions might be dependent on each isozyme/isoform in each plant tissue. This is Peroxidase 6 (PER6) from Arabidopsis thaliana (Mouse-ear cress).